Consider the following 89-residue polypeptide: Small ribosomal subunit protein uS17 (89 aa).

Belongs to the universal ribosomal protein uS17 family. In terms of assembly, part of the 30S ribosomal subunit.

Its function is as follows. One of the primary rRNA binding proteins, it binds specifically to the 5'-end of 16S ribosomal RNA. In Syntrophomonas wolfei subsp. wolfei (strain DSM 2245B / Goettingen), this protein is Small ribosomal subunit protein uS17.